The primary structure comprises 741 residues: NAD(P)H-quinone oxidoreductase subunit 5, chloroplastic (741 aa).

Transmembrane regions (helical) follow at residues 9–29 (WIIP…LLLF), 40–60 (WAFQ…NLSI), 89–109 (IDPL…MVLI), 125–145 (FAYM…SNLI), 147–167 (IYIF…FWFT), 185–205 (GDFG…SFEF), 219–239 (NEVN…GAIA), 258–278 (TPIS…FLVA), 283–303 (LFIV…ITVF), 327–347 (LGYM…FHLI), 354–374 (ALLF…VGYC), 396–416 (NSFL…CFWS), 425–445 (WLYS…TAFY), 549–569 (LFPI…GIPF), 605–625 (FFSV…YKPV), and 721–741 (YLFF…FFNL).

It belongs to the complex I subunit 5 family. In terms of assembly, NDH is composed of at least 16 different subunits, 5 of which are encoded in the nucleus.

It is found in the plastid. It localises to the chloroplast thylakoid membrane. The enzyme catalyses a plastoquinone + NADH + (n+1) H(+)(in) = a plastoquinol + NAD(+) + n H(+)(out). It carries out the reaction a plastoquinone + NADPH + (n+1) H(+)(in) = a plastoquinol + NADP(+) + n H(+)(out). Its function is as follows. NDH shuttles electrons from NAD(P)H:plastoquinone, via FMN and iron-sulfur (Fe-S) centers, to quinones in the photosynthetic chain and possibly in a chloroplast respiratory chain. The immediate electron acceptor for the enzyme in this species is believed to be plastoquinone. Couples the redox reaction to proton translocation, and thus conserves the redox energy in a proton gradient. The sequence is that of NAD(P)H-quinone oxidoreductase subunit 5, chloroplastic (ndhF) from Cichorium intybus (Chicory).